A 213-amino-acid chain; its full sequence is MKAYQREFIEFALEKQVLKFGEFTLKSGRKSPYFFNAGLFNTGRDLARLGRFYAAALADSGIEFDVLFGPAYKGIPIATTTAVALADHHDIDTPYCFNRKEAKDHGEGGNLVGSALEGRIMLVDDVITAGTAIRESMEIIQANGADLAGVLVAIDRQEKGKGELSAIQEVERDFACAVISIVSLSDLITFLEEKGDTAEHLDAVKAYRAQYGI.

Lys-26 serves as a coordination point for 5-phospho-alpha-D-ribose 1-diphosphate. Orotate is bound at residue 34–35; sequence FF. Residues 72-73, Arg-99, Lys-100, Lys-103, His-105, and 124-132 contribute to the 5-phospho-alpha-D-ribose 1-diphosphate site; these read YK and DDVITAGTA. Orotate-binding residues include Thr-128 and Arg-156.

It belongs to the purine/pyrimidine phosphoribosyltransferase family. PyrE subfamily. In terms of assembly, homodimer. Mg(2+) is required as a cofactor.

It carries out the reaction orotidine 5'-phosphate + diphosphate = orotate + 5-phospho-alpha-D-ribose 1-diphosphate. It functions in the pathway pyrimidine metabolism; UMP biosynthesis via de novo pathway; UMP from orotate: step 1/2. Catalyzes the transfer of a ribosyl phosphate group from 5-phosphoribose 1-diphosphate to orotate, leading to the formation of orotidine monophosphate (OMP). The polypeptide is Orotate phosphoribosyltransferase (Vibrio vulnificus (strain YJ016)).